The chain runs to 159 residues: D-aminoacyl-tRNA deacylase (159 aa).

Positions 146–147 match the Gly-cisPro motif, important for rejection of L-amino acids motif; it reads GP.

The protein belongs to the DTD family. As to quaternary structure, homodimer.

The protein localises to the cytoplasm. The enzyme catalyses glycyl-tRNA(Ala) + H2O = tRNA(Ala) + glycine + H(+). The catalysed reaction is a D-aminoacyl-tRNA + H2O = a tRNA + a D-alpha-amino acid + H(+). An aminoacyl-tRNA editing enzyme that deacylates mischarged D-aminoacyl-tRNAs. Also deacylates mischarged glycyl-tRNA(Ala), protecting cells against glycine mischarging by AlaRS. Acts via tRNA-based rather than protein-based catalysis; rejects L-amino acids rather than detecting D-amino acids in the active site. By recycling D-aminoacyl-tRNA to D-amino acids and free tRNA molecules, this enzyme counteracts the toxicity associated with the formation of D-aminoacyl-tRNA entities in vivo and helps enforce protein L-homochirality. The polypeptide is D-aminoacyl-tRNA deacylase (Bifidobacterium adolescentis (strain ATCC 15703 / DSM 20083 / NCTC 11814 / E194a)).